The following is a 207-amino-acid chain: Large ribosomal subunit protein uL4 (207 aa).

The segment covering 45 to 57 (RQGTHSVKNRSTV) has biased composition (polar residues). The interval 45–77 (RQGTHSVKNRSTVSGGGRKPWRQKGTGNARQGS) is disordered.

The protein belongs to the universal ribosomal protein uL4 family. In terms of assembly, part of the 50S ribosomal subunit.

Functionally, one of the primary rRNA binding proteins, this protein initially binds near the 5'-end of the 23S rRNA. It is important during the early stages of 50S assembly. It makes multiple contacts with different domains of the 23S rRNA in the assembled 50S subunit and ribosome. Forms part of the polypeptide exit tunnel. The chain is Large ribosomal subunit protein uL4 from Oenococcus oeni (strain ATCC BAA-331 / PSU-1).